The following is a 274-amino-acid chain: Thiamine kinase (274 aa).

Belongs to the thiamine kinase family.

It carries out the reaction thiamine + ATP = thiamine phosphate + ADP + H(+). It functions in the pathway cofactor biosynthesis; thiamine diphosphate biosynthesis; thiamine phosphate from thiamine: step 1/1. Functionally, catalyzes the ATP-dependent phosphorylation of thiamine to thiamine phosphate. Is involved in thiamine salvage. This is Thiamine kinase from Shigella dysenteriae serotype 1 (strain Sd197).